The primary structure comprises 195 residues: dTTP/UTP pyrophosphatase (195 aa).

Aspartate 77 acts as the Proton acceptor in catalysis.

The protein belongs to the Maf family. YhdE subfamily. A divalent metal cation is required as a cofactor.

The protein resides in the cytoplasm. The enzyme catalyses dTTP + H2O = dTMP + diphosphate + H(+). The catalysed reaction is UTP + H2O = UMP + diphosphate + H(+). Functionally, nucleoside triphosphate pyrophosphatase that hydrolyzes dTTP and UTP. May have a dual role in cell division arrest and in preventing the incorporation of modified nucleotides into cellular nucleic acids. The polypeptide is dTTP/UTP pyrophosphatase (Flavobacterium psychrophilum (strain ATCC 49511 / DSM 21280 / CIP 103535 / JIP02/86)).